Consider the following 161-residue polypeptide: Anthranilate 1,2-dioxygenase small subunit (161 aa).

The protein belongs to the bacterial ring-hydroxylating dioxygenase beta subunit family. In terms of assembly, part of a multicomponent enzyme system composed of a reductase (AndAa), a ferredoxin (AndAb) and a two-subunit oxygenase component (AndAc and AndAd).

The catalysed reaction is anthranilate + NADH + O2 + 3 H(+) = catechol + NH4(+) + CO2 + NAD(+). It carries out the reaction anthranilate + NADPH + O2 + 3 H(+) = catechol + NH4(+) + CO2 + NADP(+). It participates in aromatic compound metabolism; anthranilate degradation via hydroxylation; catechol from anthranilate: step 1/1. In terms of biological role, oxygenase component of anthranilate dioxygenase multicomponent enzyme system which catalyzes the incorporation of both atoms of molecular oxygen into anthranilate to form catechol. Can also act on benzoate and salicylate but not on 2-chlorobenzoate or o-toluate. The chain is Anthranilate 1,2-dioxygenase small subunit from Burkholderia cepacia (Pseudomonas cepacia).